Consider the following 318-residue polypeptide: NADH-ubiquinone oxidoreductase chain 1 (318 aa).

8 consecutive transmembrane segments (helical) span residues 3-23, 70-90, 100-120, 146-166, 171-191, 222-242, 253-273, and 294-314; these read MVNLLTMIVPILLAVAFLTLI, MFIIAPILALTLALTMWIPLP, LAVLFMLAMSSLAVYSILWSG, LAIILLSVLLLSGSFSLSTLI, HTWLMLSSWPLAMMWFISTLA, LFFMAEYANIIMMNTLTAILF, ELYTINLIIKALLLTVFFLWI, and LPLTLALCMWHVAMPITMAGI.

This sequence belongs to the complex I subunit 1 family.

Its subcellular location is the mitochondrion inner membrane. It carries out the reaction a ubiquinone + NADH + 5 H(+)(in) = a ubiquinol + NAD(+) + 4 H(+)(out). Functionally, core subunit of the mitochondrial membrane respiratory chain NADH dehydrogenase (Complex I) that is believed to belong to the minimal assembly required for catalysis. Complex I functions in the transfer of electrons from NADH to the respiratory chain. The immediate electron acceptor for the enzyme is believed to be ubiquinone. The polypeptide is NADH-ubiquinone oxidoreductase chain 1 (MT-ND1) (Pteropus vampyrus (Large flying fox)).